Reading from the N-terminus, the 201-residue chain is Recombination protein RecR (201 aa).

The C4-type zinc finger occupies 58-73 (CGRCGALTDVDPCGIC). Residues 81–178 (ETLCLVSEWD…RVTRLAQGIP (98 aa)) enclose the Toprim domain.

Belongs to the RecR family.

Its function is as follows. May play a role in DNA repair. It seems to be involved in an RecBC-independent recombinational process of DNA repair. It may act with RecF and RecO. The polypeptide is Recombination protein RecR (Nitratidesulfovibrio vulgaris (strain DSM 19637 / Miyazaki F) (Desulfovibrio vulgaris)).